The primary structure comprises 233 residues: Ubiquinone biosynthesis O-methyltransferase (233 aa).

Residues R37, G56, D77, and M121 each contribute to the S-adenosyl-L-methionine site.

The protein belongs to the methyltransferase superfamily. UbiG/COQ3 family.

The enzyme catalyses a 3-demethylubiquinol + S-adenosyl-L-methionine = a ubiquinol + S-adenosyl-L-homocysteine + H(+). It carries out the reaction a 3-(all-trans-polyprenyl)benzene-1,2-diol + S-adenosyl-L-methionine = a 2-methoxy-6-(all-trans-polyprenyl)phenol + S-adenosyl-L-homocysteine + H(+). It participates in cofactor biosynthesis; ubiquinone biosynthesis. Its function is as follows. O-methyltransferase that catalyzes the 2 O-methylation steps in the ubiquinone biosynthetic pathway. In Azoarcus sp. (strain BH72), this protein is Ubiquinone biosynthesis O-methyltransferase.